The primary structure comprises 1020 residues: Glycine dehydrogenase (decarboxylating), mitochondrial (1020 aa).

Residues 1–35 (MQSCARAWGLRLGRGVGGGRRLAGGSGPCWAPRSR) constitute a mitochondrion transit peptide. The interval 21–46 (RLAGGSGPCWAPRSRDSSSGGGDSAA) is disordered. 4 positions are modified to N6-acetyllysine: lysine 447, lysine 514, lysine 648, and lysine 664. Lysine 754 is modified (N6-(pyridoxal phosphate)lysine).

Belongs to the GcvP family. In terms of assembly, homodimer. Interacts with GCSH. The glycine cleavage system is composed of four proteins: P (GLDC), T (GCST), L (DLD) and H (GCSH). Pyridoxal 5'-phosphate is required as a cofactor.

It is found in the mitochondrion. The catalysed reaction is N(6)-[(R)-lipoyl]-L-lysyl-[glycine-cleavage complex H protein] + glycine + H(+) = N(6)-[(R)-S(8)-aminomethyldihydrolipoyl]-L-lysyl-[glycine-cleavage complex H protein] + CO2. Stimulated by lipoic acid. Inhibited in presence of methylamine. Functionally, the glycine cleavage system catalyzes the degradation of glycine. The P protein (GLDC) binds the alpha-amino group of glycine through its pyridoxal phosphate cofactor; CO(2) is released and the remaining methylamine moiety is then transferred to the lipoamide cofactor of the H protein (GCSH). The polypeptide is Glycine dehydrogenase (decarboxylating), mitochondrial (Homo sapiens (Human)).